The primary structure comprises 784 residues: Probable aminopeptidase 1 (784 aa).

Substrate is bound by residues Glu-103 and 236–240; that span reads GAMEN. His-271 serves as a coordination point for Zn(2+). Glu-272 (proton acceptor) is an active-site residue. Zn(2+)-binding residues include His-275 and Glu-294.

This sequence belongs to the peptidase M1 family. Requires Zn(2+) as cofactor.

It localises to the cytoplasm. The chain is Probable aminopeptidase 1 (ape1) from Saccharolobus solfataricus (strain ATCC 35092 / DSM 1617 / JCM 11322 / P2) (Sulfolobus solfataricus).